We begin with the raw amino-acid sequence, 115 residues long: Pro-FMRFamide-related neuropeptide FF (115 aa).

An N-terminal signal peptide occupies residues 1 to 22; it reads MDARQAAALLLVLLLVTDWSHA. 2 disordered regions span residues 20–51 and 78–102; these read SHAE…AQTP and FGRN…LSSP. The propeptide occupies 23-66; sequence EGPGGRDGGDQIFMEEDSGAHPAQDAQTPRSLLRSLLQAMQRPG. The residue at position 78 (F78) is a Phenylalanine amide. The propeptide occupies 81 to 94; it reads NTRGSWSNKRLSPR. F112 carries the phenylalanine amide modification.

This sequence belongs to the FARP (FMRFamide related peptide) family.

The protein localises to the secreted. Its function is as follows. Morphine modulating peptides. Have wide-ranging physiologic effects, including the modulation of morphine-induced analgesia, elevation of arterial blood pressure, and increased somatostatin secretion from the pancreas. The neuropeptide FF potentiates and sensitizes ASIC3 cation channel. The polypeptide is Pro-FMRFamide-related neuropeptide FF (NPFF) (Bos taurus (Bovine)).